The chain runs to 220 residues: Methylamine utilization ferredoxin-type protein MauM (220 aa).

4Fe-4S ferredoxin-type domains are found at residues 50–80 and 88–120; these read ALPE…LAEM and TPFF…RDIP. [4Fe-4S] cluster contacts are provided by Cys60, Cys63, Cys66, Cys70, Cys98, Cys101, Cys106, Cys110, Cys138, Cys146, Cys149, Cys153, Cys182, Cys185, Cys188, and Cys192. The region spanning 173–204 is the 4Fe-4S ferredoxin-type 3 domain; the sequence is VIPTVHSDKCTGCGTCEKHCVLGQAAIRVLPR.

It participates in one-carbon metabolism; methylamine degradation. In terms of biological role, involved in electron transfer. The protein is Methylamine utilization ferredoxin-type protein MauM (mauM) of Methylorubrum extorquens (strain ATCC 14718 / DSM 1338 / JCM 2805 / NCIMB 9133 / AM1) (Methylobacterium extorquens).